Here is a 140-residue protein sequence, read N- to C-terminus: Mitochondrial import receptor subunit TOM22 homolog (140 aa).

Residues 1–11 (MAAAAAGPGAP) are compositionally biased toward low complexity. A disordered region spans residues 1–40 (MAAAAAGPGAPLSADELLPKGDAEKPEEELEEEDDEELDE). Over 1–81 (MAAAAAGPGA…AQKMYRFSRA (81 aa)) the chain is Cytoplasmic. Residue Ser13 is modified to Phosphoserine. Over residues 25-40 (KPEEELEEEDDEELDE) the composition is skewed to acidic residues. Positions 39-48 (DETLSERLWG) are import sequence; necessary for mitochondrion outer membrane localization and integration in the TOM complex. Phosphothreonine is present on Thr41. Position 43 is a phosphoserine (Ser43). Residues 81–101 (AALWIGTTSFMILVLPVVFET) form a TMD; necessary for mitochondrion outer membrane localization and integration in the TOM complex region. The chain crosses the membrane as a helical span at residues 82–101 (ALWIGTTSFMILVLPVVFET). Residues 102–140 (EKLQMEQQQQLQQRQILLGPNTGLSGGMPGALPSLPGKI) are Mitochondrial intermembrane-facing. Positions 121-140 (PNTGLSGGMPGALPSLPGKI) are C-tail signal; necessary for mitochondrion outer membrane localization and integration in the TOM complex.

It belongs to the Tom22 family. Forms part of the preprotein translocase complex of the outer mitochondrial membrane (TOM complex) which consists of at least 7 different proteins (TOMM5, TOMM6, TOMM7, TOMM20, TOMM22, TOMM40 and TOMM70). Interacts with PPP2R2B and TOMM40.

The protein localises to the mitochondrion outer membrane. Its function is as follows. Central receptor component of the translocase of the outer membrane of mitochondria (TOM complex) responsible for the recognition and translocation of cytosolically synthesized mitochondrial preproteins. Together with the peripheral receptor TOM20 functions as the transit peptide receptor and facilitates the movement of preproteins into the translocation pore. Required for the translocation across the mitochondrial outer membrane of cytochrome P450 monooxygenases. The chain is Mitochondrial import receptor subunit TOM22 homolog (TOMM22) from Bos taurus (Bovine).